A 61-amino-acid chain; its full sequence is Insect toxin BsIT2 (61 aa).

The LCN-type CS-alpha/beta domain maps to 1–61 (DGYIKKSKGC…RWKYETKTCK (61 aa)). Disulfide bonds link Cys-10–Cys-60, Cys-14–Cys-35, Cys-21–Cys-42, and Cys-25–Cys-44.

It belongs to the long (4 C-C) scorpion toxin superfamily. Sodium channel inhibitor family. Beta subfamily. Expressed by the venom gland.

The protein localises to the secreted. In terms of biological role, depressant insect beta-toxins cause a transient contraction paralysis followed by a slow flaccid paralysis. They bind voltage-independently at site-4 of sodium channels (Nav) and shift the voltage of activation toward more negative potentials thereby affecting sodium channel activation and promoting spontaneous and repetitive firing. This toxin is active only on insects. In Hottentotta tamulus sindicus (Scorpion), this protein is Insect toxin BsIT2.